We begin with the raw amino-acid sequence, 154 residues long: Transcription antitermination protein NusB (154 aa).

This sequence belongs to the NusB family.

Involved in transcription antitermination. Required for transcription of ribosomal RNA (rRNA) genes. Binds specifically to the boxA antiterminator sequence of the ribosomal RNA (rrn) operons. The polypeptide is Transcription antitermination protein NusB (Hyphomonas neptunium (strain ATCC 15444)).